We begin with the raw amino-acid sequence, 429 residues long: Methanol:N,N-dimethyl-4-nitrosoaniline oxidoreductase (429 aa).

The protein belongs to the iron-containing alcohol dehydrogenase family. Homodecamer. Requires Mg(2+) as cofactor. It depends on Zn(2+) as a cofactor. NADPH serves as cofactor.

It carries out the reaction methanol + A = formaldehyde + AH2. Its activity is regulated as follows. Inhibited by azide and hydrazine. In terms of biological role, catalyzes the oxidation of methanol to yield formaldehyde. While the in vivo electron acceptor is not known, N,N-dimethyl-4-nitrosoaniline (NDMA) can serve this function in vitro and is reduced to 4-(hydroxylamino)-N,N-dimethylaniline. It can also use various other primary alcohols, polyols and formaldehyde. In addition, MNO is able to produce methylformate from methanol plus formaldehyde, and possesses a formaldehyde dismutase and a NADH-dependent formaldehyde reductase activity. This chain is Methanol:N,N-dimethyl-4-nitrosoaniline oxidoreductase (mno), found in Amycolatopsis methanolica.